The chain runs to 328 residues: MGKGDVLEAAPTTTAYHSLMDEYGYEVGKAIGHGSYGSVYEAFYTKQKVMVAVKIISKKKASDDYLNKFLPREIQVMKVLRHKYLINFYRAIESTSRVYIILELAQGGDVLEWIQRYGACSEPLAGKWFSQLTLGIAYLHSKSIVHRDLKLENLLLDKWENVKISDFGFAKMVPSNQPVGCSPSYRQVNCFSHLSQTYCGSFAYACPEILRGLPYNPFLSDTWSMGVILYTLVVAHLPFDDTNLKKLLRETQKEVTFPANHTISQECKNLILQMLRQATKRATILDIIKDSWVLKFQPEQPTHEIRLLEAMCQLHNTTKQHQSLQITT.

Positions 25 to 293 (YEVGKAIGHG…ILDIIKDSWV (269 aa)) constitute a Protein kinase domain. ATP is bound by residues 31–39 (IGHGSYGSV) and Lys-54. Asp-148 functions as the Proton acceptor in the catalytic mechanism. Thr-197 bears the Phosphothreonine mark.

It belongs to the protein kinase superfamily. CAMK Ser/Thr protein kinase family. As to quaternary structure, homodimer. Interacts with HSP90; this interaction stabilizes and activates TSSK4. Interacts with ODF2 (via C-terminus); this interaction promotes ODF2 phosphorylation on 'Ser-95'. May interact with CREM. Interacts with CREB1; this interaction facilitates phosphorylation on 'Ser-133'. Interacts with QRICH2. Mg(2+) serves as cofactor. In terms of processing, activated by autophosphorylation on Thr-197. ODF2 potentiates the autophosphorylation activity of TSSK4 at Thr-197. Post-translationally, ubiquitinated; HSP90 activity negatively regulates ubiquitination and degradation. As to expression, expressed only in the testis.

It localises to the cytoplasmic vesicle. The protein resides in the secretory vesicle. It is found in the acrosome. Its subcellular location is the cell projection. The protein localises to the cilium. It localises to the flagellum. It catalyses the reaction L-seryl-[protein] + ATP = O-phospho-L-seryl-[protein] + ADP + H(+). The enzyme catalyses L-threonyl-[protein] + ATP = O-phospho-L-threonyl-[protein] + ADP + H(+). Activated by phosphorylation on Thr-197. In terms of biological role, serine/threonine kinase which is involved in male germ cell development and in mature sperm function. May be involved in the Cre/Creb signaling pathway. Phosphorylates CREB1 on 'Ser-133' in vitro and can stimulate Cre/Creb pathway in cells. Phosphorylates CREM on 'Ser-116' in vitro. Phosphorylates ODF2 on 'Ser-95'. The protein is Testis-specific serine/threonine-protein kinase 4 of Homo sapiens (Human).